A 946-amino-acid chain; its full sequence is MKPLSSPLQQHWQTVVERLPEILAEATLSVQAKSVLTFSDFVQDSVIAHPEWLTELESAPPQADEWRHYAAWLQDALAQVTDEAALMRELRVFRRRIMVRIAWAQALSLVEEENILQQLSHLAETLIVAARDWLYDACCREWGTPCNHDGVPQPLLILGMGKLGGGELNFSSDIDLIFAWPEHGSTRGGRRELDNAQFFTRMGQRLIKVLDQPTMDGFVYRVDMRLRPFGDSGPLVLSFAALEDYYQEQGRDWERYAMVKARIMGAADSAYVDELRAMLRPFVFRRYIDFSVIQSLRNMKGMIAREVRRRGLKDNIKLGAGGIREIEFIVQVFQLIRGGREPSLQSRSLLPTLSAIDALHLLPENDAGQLRAAYLFLRRLENLLQSINDEQTQTLPGDELNRARLAWGMRTDDWSQLTDILAAHMANVRRVFNELIGDDETDTQEDTLSEHWRELWQDALQEDDTTPVLAHLSDDDRGRVLALIADFRKELDKRTIGPRGRQVLDHLMPHLLSDVCSREDASVPLSRITPLLVGIVTRTTYLELLSEFPGALKHLISLCAASPMVASQLARYPLLLDELLDPNTLYQPTATDAYRDELRQYLLRVPEDDEEQQLEALRQFKQTQLLRIAAADIAGTLPVMKVSDHLTWLAEAIIDAVVQQAWGQMVARYGQPTHLAERTGRGFAVVGYGKLGGWELGYSSDLDLIFLHDCPMDVMTDGEREIDGRQFYLRLAQRIMHLFSTRTSSGILYEVDARLRPSGAAGMLVTSAEAFADYQKNEAWTWEHQALVRARVVYGDPQLTSQFDAVRRDIMTLAREGKTLQTEVREMREKMRAHLGNKHRDRFDIKADEGGITDIEFITQYLVLRYAHEKPKLTRWSDNVRILELLAQNDIMDEQEAHALTLAYTTLRDELHHLALQELPGHVAQECFSKERALVRASWQKWLVAG.

The tract at residues 1-440 (MKPLSSPLQQ…VFNELIGDDE (440 aa)) is adenylyl removase. An adenylyl transferase region spans residues 449 to 946 (SEHWRELWQD…ASWQKWLVAG (498 aa)).

This sequence belongs to the GlnE family. It depends on Mg(2+) as a cofactor.

The catalysed reaction is [glutamine synthetase]-O(4)-(5'-adenylyl)-L-tyrosine + phosphate = [glutamine synthetase]-L-tyrosine + ADP. It catalyses the reaction [glutamine synthetase]-L-tyrosine + ATP = [glutamine synthetase]-O(4)-(5'-adenylyl)-L-tyrosine + diphosphate. In terms of biological role, involved in the regulation of glutamine synthetase GlnA, a key enzyme in the process to assimilate ammonia. When cellular nitrogen levels are high, the C-terminal adenylyl transferase (AT) inactivates GlnA by covalent transfer of an adenylyl group from ATP to specific tyrosine residue of GlnA, thus reducing its activity. Conversely, when nitrogen levels are low, the N-terminal adenylyl removase (AR) activates GlnA by removing the adenylyl group by phosphorolysis, increasing its activity. The regulatory region of GlnE binds the signal transduction protein PII (GlnB) which indicates the nitrogen status of the cell. This chain is Bifunctional glutamine synthetase adenylyltransferase/adenylyl-removing enzyme, found in Citrobacter koseri (strain ATCC BAA-895 / CDC 4225-83 / SGSC4696).